The primary structure comprises 141 residues: Small ribosomal subunit protein eS12 (141 aa).

This sequence belongs to the eukaryotic ribosomal protein eS12 family. Component of the small ribosomal subunit. Mature ribosomes consist of a small (40S) and a large (60S) subunit. The 40S subunit contains about 32 different proteins and 1 molecule of RNA (18S). The 60S subunit contains about 42 different proteins and 3 molecules of RNA (28S, 5.8S and 5S).

Its subcellular location is the cytoplasm. Component of the ribosome, a large ribonucleoprotein complex responsible for the synthesis of proteins in the cell. The small ribosomal subunit (SSU) binds messenger RNAs (mRNAs) and translates the encoded message by selecting cognate aminoacyl-transfer RNA (tRNA) molecules. The large subunit (LSU) contains the ribosomal catalytic site termed the peptidyl transferase center (PTC), which catalyzes the formation of peptide bonds, thereby polymerizing the amino acids delivered by tRNAs into a polypeptide chain. The nascent polypeptides leave the ribosome through a tunnel in the LSU and interact with protein factors that function in enzymatic processing, targeting, and the membrane insertion of nascent chains at the exit of the ribosomal tunnel. The chain is Small ribosomal subunit protein eS12 from Plasmodium falciparum (isolate 3D7).